A 227-amino-acid chain; its full sequence is Thymidylate kinase (227 aa).

Residue 16 to 23 (GIDGAGKT) participates in ATP binding.

Belongs to the thymidylate kinase family.

The catalysed reaction is dTMP + ATP = dTDP + ADP. Functionally, phosphorylation of dTMP to form dTDP in both de novo and salvage pathways of dTTP synthesis. The protein is Thymidylate kinase of Xanthomonas oryzae pv. oryzae (strain MAFF 311018).